Reading from the N-terminus, the 335-residue chain is Ferrochelatase (335 aa).

Residues His207 and Glu288 each coordinate Fe cation.

This sequence belongs to the ferrochelatase family.

The protein localises to the cytoplasm. It carries out the reaction heme b + 2 H(+) = protoporphyrin IX + Fe(2+). The protein operates within porphyrin-containing compound metabolism; protoheme biosynthesis; protoheme from protoporphyrin-IX: step 1/1. Its function is as follows. Catalyzes the ferrous insertion into protoporphyrin IX. The chain is Ferrochelatase from Helicobacter pylori (strain G27).